The chain runs to 366 residues: Chorismate synthase (366 aa).

NADP(+)-binding residues include Arg48 and Arg54. FMN contacts are provided by residues 125-127 (RSS), 238-239 (NA), Gly278, 293-297 (KPTSS), and Arg319.

Belongs to the chorismate synthase family. Homotetramer. It depends on FMNH2 as a cofactor.

It carries out the reaction 5-O-(1-carboxyvinyl)-3-phosphoshikimate = chorismate + phosphate. It functions in the pathway metabolic intermediate biosynthesis; chorismate biosynthesis; chorismate from D-erythrose 4-phosphate and phosphoenolpyruvate: step 7/7. Its function is as follows. Catalyzes the anti-1,4-elimination of the C-3 phosphate and the C-6 proR hydrogen from 5-enolpyruvylshikimate-3-phosphate (EPSP) to yield chorismate, which is the branch point compound that serves as the starting substrate for the three terminal pathways of aromatic amino acid biosynthesis. This reaction introduces a second double bond into the aromatic ring system. The protein is Chorismate synthase of Neisseria gonorrhoeae (strain ATCC 700825 / FA 1090).